The chain runs to 128 residues: MKKLLLTVIQIALLFIFARLINWVTALLHINIPGSIIGIVILFTLLHFNIIKLEWIELGAAWLLGELLLFFIPSAVGVIEYGDIMSKFGVSILLVVIISTFVVMVSTGTLTQLIAKRKEKKHTCSSEL.

4 consecutive transmembrane segments (helical) span residues 4–24 (LLLT…INWV), 26–46 (ALLH…FTLL), 59–79 (GAAW…VGVI), and 88–108 (FGVS…VSTG).

Belongs to the CidA/LrgA family. CidA subfamily.

Its subcellular location is the cell membrane. In terms of biological role, increases the activity of extracellular murein hydrolases possibly by mediating their export via hole formation. Inhibited by the antiholin-like proteins LrgAB. In an unstressed cell, the LrgAB products probably inhibit the function of the CidA protein. When a cell is stressed by the addition of antibiotics or by other factors in the environment, CidA possibly oligomerizes within the bacterial cell membrane, creating lesions that disrupt the proton motive force, which in turn results in loss of cell viability. These lesions are also hypothesized to regulate the subsequent cell lysis by either allowing the murein hydrolases access to the cell wall substrate and/or regulating their activity by a possible change in the cell wall pH that results from loss of membrane potential. In Bacillus subtilis (strain 168), this protein is Holin-like protein CidA.